Here is a 124-residue protein sequence, read N- to C-terminus: Tax1-binding protein 3 homolog (124 aa).

In terms of domain architecture, PDZ spans 18-106 (AVELHKQEVI…DRAVKFIKQS (89 aa)).

Functionally, may regulate a number of protein-protein interactions by competing for PDZ domain binding sites. The chain is Tax1-binding protein 3 homolog from Caenorhabditis elegans.